We begin with the raw amino-acid sequence, 89 residues long: Small ribosomal subunit protein uS15 (89 aa).

It belongs to the universal ribosomal protein uS15 family. In terms of assembly, part of the 30S ribosomal subunit. Forms a bridge to the 50S subunit in the 70S ribosome, contacting the 23S rRNA.

Its function is as follows. One of the primary rRNA binding proteins, it binds directly to 16S rRNA where it helps nucleate assembly of the platform of the 30S subunit by binding and bridging several RNA helices of the 16S rRNA. Forms an intersubunit bridge (bridge B4) with the 23S rRNA of the 50S subunit in the ribosome. This is Small ribosomal subunit protein uS15 from Geobacillus stearothermophilus (Bacillus stearothermophilus).